The chain runs to 328 residues: Ribosomal RNA small subunit methyltransferase H (328 aa).

S-adenosyl-L-methionine contacts are provided by residues 37 to 39 (GGH), Asp-57, Phe-83, Asp-104, and Gln-111.

It belongs to the methyltransferase superfamily. RsmH family.

The protein resides in the cytoplasm. It catalyses the reaction cytidine(1402) in 16S rRNA + S-adenosyl-L-methionine = N(4)-methylcytidine(1402) in 16S rRNA + S-adenosyl-L-homocysteine + H(+). Functionally, specifically methylates the N4 position of cytidine in position 1402 (C1402) of 16S rRNA. The chain is Ribosomal RNA small subunit methyltransferase H from Neisseria meningitidis serogroup C / serotype 2a (strain ATCC 700532 / DSM 15464 / FAM18).